Here is a 331-residue protein sequence, read N- to C-terminus: Smad-related protein daf-14 (331 aa).

The region spanning 134 to 331 (WCTIFYYELT…NERPEIGSRS (198 aa)) is the MH2 domain. Residues 168–187 (ECRMSLTSQPSSRNSKSSQI) form a disordered region. Residues 175–185 (SQPSSRNSKSS) show a composition bias toward low complexity.

As to quaternary structure, interacts with R-SMAD daf-8 and co-SMAD daf-3. Interacts with daf-3 in a daf-8 dependent manner.

Functionally, probably an atypical receptor-regulated SMAD (R-SMAD) that is an intracellular signal transducer and transcriptional modulator activated by TGF-beta-like daf-7 signaling. Plays a role in TGF-beta-like daf-7 signaling in regulating entry into a developmentally arrested larval state known as dauer, in response to harsh environmental conditions; partially redundant with R-SMAD daf-8. The chain is Smad-related protein daf-14 from Caenorhabditis elegans.